We begin with the raw amino-acid sequence, 330 residues long: Malate dehydrogenase (330 aa).

An NAD(+)-binding site is contributed by 12 to 18; it reads GAAGQIG. Residues Arg93 and Arg99 each coordinate substrate. NAD(+)-binding positions include Asn106, Gln113, and 130 to 132; that span reads VGN. Substrate is bound by residues Asn132 and Arg163. His188 functions as the Proton acceptor in the catalytic mechanism.

The protein belongs to the LDH/MDH superfamily. MDH type 2 family.

The enzyme catalyses (S)-malate + NAD(+) = oxaloacetate + NADH + H(+). Catalyzes the reversible oxidation of malate to oxaloacetate. In Thermobifida fusca (strain YX), this protein is Malate dehydrogenase.